Here is a 117-residue protein sequence, read N- to C-terminus: Carboxysome shell protein CcmK4 (117 aa).

The region spanning 5-91 (AVGSLETKGF…PHENVECVLP (87 aa)) is the BMC domain.

This sequence belongs to the bacterial microcompartments protein family. CcmK subfamily. As to quaternary structure, crystallizes as a homohexamer. Interacts stably with CcmK3, forming heterohexamers that can make dodecamers. Heterohexamers have a 1:2 CcmK3:CcmK4 stoichiometry. Upon expression in E.coli forms large aggregates.

It localises to the carboxysome. Its function is as follows. A probably essential, minor shell protein of the carboxysome, a polyhedral inclusion where RuBisCO (ribulose bisphosphate carboxylase, rbcL-rbcS) is sequestered. Hexamers form sheets that form the facets of the polyhedral carboxysome. In PCC 7418 there are several CcmK paralogs with presumably functional differences. This subunit can probably make both homohexamers and heterohexamers with CcmK3. Both hexamers can also make dodecamers, formation depends on buffer conditions. In Halothece sp. (strain PCC 7418) (Synechococcus sp. (strain PCC 7418)), this protein is Carboxysome shell protein CcmK4.